Reading from the N-terminus, the 284-residue chain is Homeobox protein CDX-4 (284 aa).

Disordered regions lie at residues 15 to 40 and 120 to 155; these read PGTL…SPMP and GGGT…SRHS. A compositionally biased stretch (gly residues) spans 22 to 37; the sequence is GGDGTAGTGGTGGGGS. The homeobox DNA-binding region spans 173–232; the sequence is KEKYRVVYTDHQRLELEKEFHCNRYITIQRKSELAVNLGLSERQVKIWFQNRRAKERKMI. A compositionally biased stretch (polar residues) spans 238-253; it reads QFENSGGSVQSDSDSI. The segment at 238–259 is disordered; the sequence is QFENSGGSVQSDSDSISPGELP.

The protein belongs to the Caudal homeobox family.

It is found in the nucleus. This chain is Homeobox protein CDX-4 (CDX4), found in Homo sapiens (Human).